A 57-amino-acid chain; its full sequence is Large ribosomal subunit protein bL32 (57 aa).

The disordered stretch occupies residues 1–20 (MAVQQRRSSKHRRDKRRSHD). Over residues 7–18 (RSSKHRRDKRRS) the composition is skewed to basic residues.

Belongs to the bacterial ribosomal protein bL32 family.

This Mycoplasma genitalium (strain ATCC 33530 / DSM 19775 / NCTC 10195 / G37) (Mycoplasmoides genitalium) protein is Large ribosomal subunit protein bL32 (rpmF).